A 488-amino-acid polypeptide reads, in one-letter code: Multidrug resistance outer membrane protein MdtP (488 aa).

An N-terminal signal peptide occupies residues 1–23 (MINRQLSRLLLCSILGSTTLISG). A lipid anchor (N-palmitoyl cysteine) is attached at Cys24. Cys24 carries S-diacylglycerol cysteine lipidation.

It belongs to the outer membrane factor (OMF) (TC 1.B.17) family. As to quaternary structure, could be part of a tripartite efflux system composed of MdtN, MdtO and MdtP.

The protein resides in the cell outer membrane. Could be involved in resistance to puromycin, acriflavine and tetraphenylarsonium chloride. The sequence is that of Multidrug resistance outer membrane protein MdtP (mdtP) from Escherichia coli O6:H1 (strain CFT073 / ATCC 700928 / UPEC).